The following is a 466-amino-acid chain: Signal recognition particle 54 kDa protein (466 aa).

Residues Gly104–Thr111, Asp184–Arg188, and Thr242–Asp245 each bind GTP. Positions Gln446–Gly466 are disordered. Residues Gln448–Gly466 are compositionally biased toward gly residues.

The protein belongs to the GTP-binding SRP family. SRP54 subfamily. As to quaternary structure, part of the signal recognition particle protein translocation system, which is composed of SRP and FtsY. Archaeal SRP consists of a 7S RNA molecule of 300 nucleotides and two protein subunits: SRP54 and SRP19.

It localises to the cytoplasm. It catalyses the reaction GTP + H2O = GDP + phosphate + H(+). Functionally, involved in targeting and insertion of nascent membrane proteins into the cytoplasmic membrane. Binds to the hydrophobic signal sequence of the ribosome-nascent chain (RNC) as it emerges from the ribosomes. The SRP-RNC complex is then targeted to the cytoplasmic membrane where it interacts with the SRP receptor FtsY. The sequence is that of Signal recognition particle 54 kDa protein from Haloquadratum walsbyi (strain DSM 16790 / HBSQ001).